A 394-amino-acid chain; its full sequence is NAD(P)H-quinone oxidoreductase subunit H (394 aa).

The protein belongs to the complex I 49 kDa subunit family. As to quaternary structure, NDH-1 can be composed of about 15 different subunits; different subcomplexes with different compositions have been identified which probably have different functions.

The protein localises to the cellular thylakoid membrane. The catalysed reaction is a plastoquinone + NADH + (n+1) H(+)(in) = a plastoquinol + NAD(+) + n H(+)(out). It catalyses the reaction a plastoquinone + NADPH + (n+1) H(+)(in) = a plastoquinol + NADP(+) + n H(+)(out). Its function is as follows. NDH-1 shuttles electrons from an unknown electron donor, via FMN and iron-sulfur (Fe-S) centers, to quinones in the respiratory and/or the photosynthetic chain. The immediate electron acceptor for the enzyme in this species is believed to be plastoquinone. Couples the redox reaction to proton translocation, and thus conserves the redox energy in a proton gradient. Cyanobacterial NDH-1 also plays a role in inorganic carbon-concentration. The sequence is that of NAD(P)H-quinone oxidoreductase subunit H from Synechococcus sp. (strain ATCC 27144 / PCC 6301 / SAUG 1402/1) (Anacystis nidulans).